The following is a 230-amino-acid chain: Heptaprenylglyceryl phosphate synthase (230 aa).

Lysine 12 contacts sn-glycerol 1-phosphate. Mg(2+) contacts are provided by aspartate 14 and threonine 40. Sn-glycerol 1-phosphate contacts are provided by residues 159 to 164 (YIEYSG), glycine 189, and 209 to 210 (GD).

Belongs to the GGGP/HepGP synthase family. Group I subfamily. In terms of assembly, homodimer. The cofactor is Mg(2+).

The catalysed reaction is sn-glycerol 1-phosphate + all-trans-heptaprenyl diphosphate = 3-heptaprenyl-sn-glycero-1-phosphate + diphosphate. The protein operates within membrane lipid metabolism; glycerophospholipid metabolism. In terms of biological role, prenyltransferase that catalyzes in vivo the transfer of the heptaprenyl moiety of heptaprenyl pyrophosphate (HepPP; 35 carbon atoms) to the C3 hydroxyl of sn-glycerol-1-phosphate (G1P), producing heptaprenylglyceryl phosphate (HepGP). This reaction is an ether-bond-formation step in the biosynthesis of archaea-type G1P-based membrane lipids found in Bacillales. This is Heptaprenylglyceryl phosphate synthase from Staphylococcus aureus (strain USA300).